The following is a 310-amino-acid chain: Tagatose-6-phosphate kinase (310 aa).

It belongs to the carbohydrate kinase PfkB family. LacC subfamily.

The enzyme catalyses D-tagatofuranose 6-phosphate + ATP = D-tagatofuranose 1,6-bisphosphate + ADP + H(+). It participates in carbohydrate metabolism; D-tagatose 6-phosphate degradation; D-glyceraldehyde 3-phosphate and glycerone phosphate from D-tagatose 6-phosphate: step 1/2. In Streptococcus agalactiae serotype Ia (strain ATCC 27591 / A909 / CDC SS700), this protein is Tagatose-6-phosphate kinase.